The chain runs to 90 residues: Small ribosomal subunit protein uS15c (90 aa).

This sequence belongs to the universal ribosomal protein uS15 family. As to quaternary structure, part of the 30S ribosomal subunit.

The protein resides in the plastid. The protein localises to the chloroplast. The chain is Small ribosomal subunit protein uS15c (rps15) from Phaseolus vulgaris (Kidney bean).